The sequence spans 758 residues: Spastin (758 aa).

The tract at residues 1 to 99 (MVRTKNQSSS…PTTCSPRSGH (99 aa)) is disordered. At 1-121 (MVRTKNQSSS…KQNLYVVSFP (121 aa)) the chain is on the cytoplasmic side. Positions 1–210 (MVRTKNQSSS…RPIQPLEMAA (210 aa)) are required for localization to punctate cytoplasmic foci. Low complexity-rich tracts occupy residues 8–28 (SSSS…SSGA), 43–58 (RSSS…AGGS), 66–76 (SSNRRSPGSSP), and 85–95 (TDDLTPTTCSP). Residues 122-142 (IIFLFNVLRSLIYQLFCIFRY) constitute an intramembrane region (helical). Topologically, residues 143-758 (LYGASTKVIY…WSQDYGDITI (616 aa)) are cytoplasmic. 2 stretches are compositionally biased toward polar residues: residues 169–180 (SKEQQQSLNHPS) and 189–198 (QEQQLSNQPQ). Residues 169-203 (SKEQQQSLNHPSELSREGDGQEQQLSNQPQRFRPI) are disordered. The interval 208-758 (MAANRPGGGY…WSQDYGDITI (551 aa)) is sufficient for interaction with microtubules and microtubule severing. The 76-residue stretch at 233-308 (HRRAFEYISK…SMARDRLHFL (76 aa)) folds into the MIT domain. Disordered stretches follow at residues 353 to 375 (RVRS…SGRK) and 390 to 454 (NKSQ…ASTP). Composition is skewed to polar residues over residues 390–406 (NKSQ…TSVG) and 425–454 (QFSS…ASTP). The interval 443–455 (NNGPSGSGASTPV) is required for interaction with microtubules. 523–530 (GPPGNGKT) lines the ATP pocket.

Belongs to the AAA ATPase family. Spastin subfamily. As to quaternary structure, homohexamer. The homohexamer is stabilized by ATP-binding. The homohexamer may adopt a ring conformation through which microtubules pass prior to being severed. Interacts with microtubules. Interacts with atl; may be involved in microtubule dynamics.

It localises to the membrane. The protein localises to the cytoplasm. The protein resides in the cytoskeleton. Its subcellular location is the microtubule organizing center. It is found in the centrosome. It localises to the chromosome. The protein localises to the lipid droplet. The catalysed reaction is n ATP + n H2O + a microtubule = n ADP + n phosphate + (n+1) alpha/beta tubulin heterodimers.. Its function is as follows. ATP-dependent microtubule severing protein. Stimulates microtubule minus-end depolymerization and poleward microtubule flux in the mitotic spindle. Regulates microtubule stability in the neuromuscular junction synapse. Involved in lipid metabolism by regulating the size and distribution of lipid droplets. Involved in axon regeneration by regulating microtubule severing. The polypeptide is Spastin (Drosophila erecta (Fruit fly)).